The chain runs to 244 residues: Adenosylcobinamide-GDP ribazoletransferase (244 aa).

A run of 5 helical transmembrane segments spans residues 31–51 (LLFYPVVGLLFGLLLWLASHL), 55–75 (APAPLHAALLLALWVLLSGAL), 109–129 (IAVVVLVLVLLLKFCALWVLV), 134–154 (GGWLVLAPVVGRAAMLGLFMG), and 188–208 (VVLGGSPGLWMLLLSLGVFLW).

It belongs to the CobS family. The cofactor is Mg(2+).

Its subcellular location is the cell inner membrane. It carries out the reaction alpha-ribazole + adenosylcob(III)inamide-GDP = adenosylcob(III)alamin + GMP + H(+). It catalyses the reaction alpha-ribazole 5'-phosphate + adenosylcob(III)inamide-GDP = adenosylcob(III)alamin 5'-phosphate + GMP + H(+). The protein operates within cofactor biosynthesis; adenosylcobalamin biosynthesis; adenosylcobalamin from cob(II)yrinate a,c-diamide: step 7/7. In terms of biological role, joins adenosylcobinamide-GDP and alpha-ribazole to generate adenosylcobalamin (Ado-cobalamin). Also synthesizes adenosylcobalamin 5'-phosphate from adenosylcobinamide-GDP and alpha-ribazole 5'-phosphate. The polypeptide is Adenosylcobinamide-GDP ribazoletransferase (Pseudomonas entomophila (strain L48)).